The primary structure comprises 209 residues: Small ribosomal subunit protein uS4 (209 aa).

Positions 9, 12, 26, and 31 each coordinate Zn(2+). The C4-type zinc-finger motif lies at 9–31 (CKLCRREGMKLYLKGERCYTDKC). The S4 RNA-binding domain occupies 98–161 (ARLDNVVYRM…RDLEVIKKAI (64 aa)).

It belongs to the universal ribosomal protein uS4 family. In terms of assembly, part of the 30S ribosomal subunit. Contacts protein S5. The interaction surface between S4 and S5 is involved in control of translational fidelity. Requires Zn(2+) as cofactor.

Functionally, one of the primary rRNA binding proteins, it binds directly to 16S rRNA where it nucleates assembly of the body of the 30S subunit. With S5 and S12 plays an important role in translational accuracy. The chain is Small ribosomal subunit protein uS4 (rpsD) from Thermotoga maritima (strain ATCC 43589 / DSM 3109 / JCM 10099 / NBRC 100826 / MSB8).